Here is a 556-residue protein sequence, read N- to C-terminus: Formate--tetrahydrofolate ligase (556 aa).

Residue 65–72 (TPAGEGKS) coordinates ATP.

The protein belongs to the formate--tetrahydrofolate ligase family.

The catalysed reaction is (6S)-5,6,7,8-tetrahydrofolate + formate + ATP = (6R)-10-formyltetrahydrofolate + ADP + phosphate. The protein operates within one-carbon metabolism; tetrahydrofolate interconversion. The chain is Formate--tetrahydrofolate ligase from Streptococcus agalactiae serotype III (strain NEM316).